A 425-amino-acid polypeptide reads, in one-letter code: Serine hydroxymethyltransferase (425 aa).

132–134 (GHL) is a binding site for (6S)-5,6,7,8-tetrahydrofolate. Residue Lys237 is modified to N6-(pyridoxal phosphate)lysine.

Belongs to the SHMT family. As to quaternary structure, homodimer. It depends on pyridoxal 5'-phosphate as a cofactor.

It localises to the cytoplasm. It catalyses the reaction (6R)-5,10-methylene-5,6,7,8-tetrahydrofolate + glycine + H2O = (6S)-5,6,7,8-tetrahydrofolate + L-serine. Its pathway is one-carbon metabolism; tetrahydrofolate interconversion. It functions in the pathway amino-acid biosynthesis; glycine biosynthesis; glycine from L-serine: step 1/1. Its function is as follows. Catalyzes the reversible interconversion of serine and glycine with tetrahydrofolate (THF) serving as the one-carbon carrier. This reaction serves as the major source of one-carbon groups required for the biosynthesis of purines, thymidylate, methionine, and other important biomolecules. Also exhibits THF-independent aldolase activity toward beta-hydroxyamino acids, producing glycine and aldehydes, via a retro-aldol mechanism. The sequence is that of Serine hydroxymethyltransferase from Wolbachia sp. subsp. Brugia malayi (strain TRS).